The primary structure comprises 416 residues: 1-deoxy-D-xylulose 5-phosphate reductoisomerase (416 aa).

NADPH contacts are provided by Thr10, Gly11, Ser12, Ile13, Gly36, Arg37, Asn38, and Asn130. Lys131 contacts 1-deoxy-D-xylulose 5-phosphate. Residue Glu132 coordinates NADPH. Residue Asp156 participates in Mn(2+) binding. Positions 157, 158, 194, and 217 each coordinate 1-deoxy-D-xylulose 5-phosphate. A Mn(2+)-binding site is contributed by Glu158. Residue Gly223 coordinates NADPH. 1-deoxy-D-xylulose 5-phosphate-binding residues include Ser230, Asn235, Lys236, and Glu239. Mn(2+) is bound at residue Glu239.

It belongs to the DXR family. Mg(2+) is required as a cofactor. The cofactor is Mn(2+).

It catalyses the reaction 2-C-methyl-D-erythritol 4-phosphate + NADP(+) = 1-deoxy-D-xylulose 5-phosphate + NADPH + H(+). The protein operates within isoprenoid biosynthesis; isopentenyl diphosphate biosynthesis via DXP pathway; isopentenyl diphosphate from 1-deoxy-D-xylulose 5-phosphate: step 1/6. Its function is as follows. Catalyzes the NADPH-dependent rearrangement and reduction of 1-deoxy-D-xylulose-5-phosphate (DXP) to 2-C-methyl-D-erythritol 4-phosphate (MEP). In Synechococcus sp. (strain CC9311), this protein is 1-deoxy-D-xylulose 5-phosphate reductoisomerase.